The following is a 309-amino-acid chain: Uridylate-specific endoribonuclease C (309 aa).

The signal sequence occupies residues 1–22 (MASGYDFGWIPVLLSLFTLTDA). The EndoU domain maps to 27–303 (VNQELSNIFN…IGTAYPKLLS (277 aa)). Asn53 and Asn121 each carry an N-linked (GlcNAc...) asparagine glycan. Residues His181, His197, and Lys242 contribute to the active site.

This sequence belongs to the ENDOU family. As to quaternary structure, monomer. Requires Mn(2+) as cofactor.

It is found in the secreted. The catalysed reaction is ribonucleotidyl-uridine-RNA = a 5'-end dephospho-uridine-RNA + a 3'-end 2',3'-cyclophospho-ribonucleotide-RNA. Its function is as follows. Endoribonuclease that cleaves single-stranded RNAs at 5' of uridylates and releases a product with a 2',3'-cyclic phosphate at the 3'-end. The UU and GU sites are more efficiently cleaved than CU and AU sites. This is Uridylate-specific endoribonuclease C (endouc) from Danio rerio (Zebrafish).